A 394-amino-acid polypeptide reads, in one-letter code: MVSVTTKILILGSTGSIGTQALEVIADNPDLFTLVGIAAGGSNPGLVIEQARAFNLRPHQVAVAGKQAAGEVGEALGGTVIDGPDAAQTLVESVQATDPADAVLNALVGSMGLGATLATLRSGAHLALANKESLVAGGEFVMAQARPGQIIPVDSEHSAMAQCLRSGTEGEVARIVLTASGGPFRGWTREQMWEVTPEQAAAHPTWSMGQMNTLNSATLINKGLELIEATLLFDTDADLIDVTVHPQSIIHSMITFRDGCTIAQASPPSMKLPIALAMNWPHRVPGAQPALDFTQAHTWTFEPVDDAAFPAVQLARDVAKQKGTFPAVYNAANEEAAAAFLAGRIRFPQIVDVVSEILQGASQFAGVSSDVDDILATESEARARANQLIDRLAR.

7 residues coordinate NADPH: threonine 14, glycine 15, serine 16, isoleucine 17, glycine 40, asparagine 43, and asparagine 130. Lysine 131 serves as a coordination point for 1-deoxy-D-xylulose 5-phosphate. Glutamate 132 contributes to the NADPH binding site. Aspartate 154 lines the Mn(2+) pocket. Residues serine 155, glutamate 156, serine 180, and histidine 203 each contribute to the 1-deoxy-D-xylulose 5-phosphate site. Glutamate 156 lines the Mn(2+) pocket. Glycine 209 contributes to the NADPH binding site. Serine 216, asparagine 221, lysine 222, and glutamate 225 together coordinate 1-deoxy-D-xylulose 5-phosphate. Residue glutamate 225 coordinates Mn(2+).

This sequence belongs to the DXR family. Mg(2+) is required as a cofactor. It depends on Mn(2+) as a cofactor.

It catalyses the reaction 2-C-methyl-D-erythritol 4-phosphate + NADP(+) = 1-deoxy-D-xylulose 5-phosphate + NADPH + H(+). It participates in isoprenoid biosynthesis; isopentenyl diphosphate biosynthesis via DXP pathway; isopentenyl diphosphate from 1-deoxy-D-xylulose 5-phosphate: step 1/6. In terms of biological role, catalyzes the NADPH-dependent rearrangement and reduction of 1-deoxy-D-xylulose-5-phosphate (DXP) to 2-C-methyl-D-erythritol 4-phosphate (MEP). This chain is 1-deoxy-D-xylulose 5-phosphate reductoisomerase, found in Corynebacterium efficiens (strain DSM 44549 / YS-314 / AJ 12310 / JCM 11189 / NBRC 100395).